The chain runs to 365 residues: Peptide chain release factor 1 (365 aa).

The residue at position 236 (glutamine 236) is an N5-methylglutamine.

It belongs to the prokaryotic/mitochondrial release factor family. Post-translationally, methylated by PrmC. Methylation increases the termination efficiency of RF1.

The protein localises to the cytoplasm. Its function is as follows. Peptide chain release factor 1 directs the termination of translation in response to the peptide chain termination codons UAG and UAA. The chain is Peptide chain release factor 1 from Latilactobacillus sakei subsp. sakei (strain 23K) (Lactobacillus sakei subsp. sakei).